A 266-amino-acid chain; its full sequence is Putative pyruvate, phosphate dikinase regulatory protein (266 aa).

149–156 (GVSRTSKT) lines the ADP pocket.

It belongs to the pyruvate, phosphate/water dikinase regulatory protein family. PDRP subfamily.

It carries out the reaction N(tele)-phospho-L-histidyl/L-threonyl-[pyruvate, phosphate dikinase] + ADP = N(tele)-phospho-L-histidyl/O-phospho-L-threonyl-[pyruvate, phosphate dikinase] + AMP + H(+). It catalyses the reaction N(tele)-phospho-L-histidyl/O-phospho-L-threonyl-[pyruvate, phosphate dikinase] + phosphate + H(+) = N(tele)-phospho-L-histidyl/L-threonyl-[pyruvate, phosphate dikinase] + diphosphate. Bifunctional serine/threonine kinase and phosphorylase involved in the regulation of the pyruvate, phosphate dikinase (PPDK) by catalyzing its phosphorylation/dephosphorylation. The protein is Putative pyruvate, phosphate dikinase regulatory protein of Geobacillus sp. (strain WCH70).